An 848-amino-acid chain; its full sequence is Protein translocase subunit SecA (848 aa).

Residues Gln-86, 104–108 (GEGKT), and Asp-508 each bind ATP. Zn(2+) is bound by residues Cys-833, Cys-835, Cys-844, and Cys-845.

Belongs to the SecA family. As to quaternary structure, monomer and homodimer. Part of the essential Sec protein translocation apparatus which comprises SecA, SecYEG and auxiliary proteins SecDF. Other proteins may also be involved. The cofactor is Zn(2+).

Its subcellular location is the cell membrane. The protein localises to the cytoplasm. It carries out the reaction ATP + H2O + cellular proteinSide 1 = ADP + phosphate + cellular proteinSide 2.. Functionally, part of the Sec protein translocase complex. Interacts with the SecYEG preprotein conducting channel. Has a central role in coupling the hydrolysis of ATP to the transfer of proteins into and across the cell membrane, serving as an ATP-driven molecular motor driving the stepwise translocation of polypeptide chains across the membrane. The polypeptide is Protein translocase subunit SecA (Caldicellulosiruptor saccharolyticus (strain ATCC 43494 / DSM 8903 / Tp8T 6331)).